The sequence spans 333 residues: D-fructose 1,6-bisphosphatase class 2/sedoheptulose 1,7-bisphosphatase (333 aa).

Mn(2+) is bound by residues Asp-33, Glu-57, Asp-85, and Glu-88. Residues 88–90 (EGT), Tyr-119, 164–166 (RTR), and 186–188 (DGD) contribute to the substrate site. Residue Glu-213 participates in Mn(2+) binding.

Belongs to the FBPase class 2 family. As to quaternary structure, homotetramer. Requires Mn(2+) as cofactor.

The enzyme catalyses beta-D-fructose 1,6-bisphosphate + H2O = beta-D-fructose 6-phosphate + phosphate. It carries out the reaction D-sedoheptulose 1,7-bisphosphate + H2O = D-sedoheptulose 7-phosphate + phosphate. It functions in the pathway carbohydrate biosynthesis; Calvin cycle. Functionally, catalyzes the hydrolysis of fructose 1,6-bisphosphate (Fru 1,6-P2) and sedoheptulose 1,7-bisphosphate (Sed 1,7-P2) to fructose 6-phosphate and sedoheptulose 7-phosphate, respectively. This is D-fructose 1,6-bisphosphatase class 2/sedoheptulose 1,7-bisphosphatase from Prochlorococcus marinus (strain MIT 9312).